The chain runs to 1077 residues: Ubiquitin-activating enzyme E1 2 (1077 aa).

The disordered stretch occupies residues 16 to 36 (SPMKKRRIDHTESADGSAINA). ATP-binding positions include Ala499, Asp525, Arg536, Lys549, and 597-598 (DN). Cys653 (glycyl thioester intermediate) is an active-site residue.

The protein belongs to the ubiquitin-activating E1 family. As to quaternary structure, monomer. In terms of tissue distribution, expressed in leaves, flowers, roots and stems. Detected in germinating seeds, cotyledons, hypocotyls, vascular tissues, anthers, filaments, pollen, style, stigma, sepals, petals, ovary, developing ovules, funiculi and silique walls.

The catalysed reaction is ATP + ubiquitin + [E1 ubiquitin-activating enzyme]-L-cysteine = AMP + diphosphate + S-ubiquitinyl-[E1 ubiquitin-activating enzyme]-L-cysteine.. Its pathway is protein modification; protein ubiquitination. Functionally, activates ubiquitin by first adenylating its C-terminal glycine residue with ATP, and thereafter linking this residue to the side chain of a cysteine residue in E1, yielding a ubiquitin-E1 thioester and free AMP. This Arabidopsis thaliana (Mouse-ear cress) protein is Ubiquitin-activating enzyme E1 2 (UBA2).